Consider the following 644-residue polypeptide: DNA gyrase subunit B (644 aa).

The region spanning 429-543 (CEIFLVEGDS…AGYVYIAQPP (115 aa)) is the Toprim domain. Residues E435, D508, and D510 each coordinate Mg(2+).

The protein belongs to the type II topoisomerase GyrB family. As to quaternary structure, heterotetramer, composed of two GyrA and two GyrB chains. In the heterotetramer, GyrA contains the active site tyrosine that forms a transient covalent intermediate with DNA, while GyrB binds cofactors and catalyzes ATP hydrolysis. The cofactor is Mg(2+). Mn(2+) serves as cofactor. Requires Ca(2+) as cofactor.

The protein resides in the cytoplasm. It catalyses the reaction ATP-dependent breakage, passage and rejoining of double-stranded DNA.. Its function is as follows. A type II topoisomerase that negatively supercoils closed circular double-stranded (ds) DNA in an ATP-dependent manner to modulate DNA topology and maintain chromosomes in an underwound state. Negative supercoiling favors strand separation, and DNA replication, transcription, recombination and repair, all of which involve strand separation. Also able to catalyze the interconversion of other topological isomers of dsDNA rings, including catenanes and knotted rings. Type II topoisomerases break and join 2 DNA strands simultaneously in an ATP-dependent manner. The sequence is that of DNA gyrase subunit B from Staphylococcus aureus (strain COL).